A 216-amino-acid polypeptide reads, in one-letter code: Large ribosomal subunit protein uL3 (216 aa).

The tract at residues 119 to 143 (GYQGNIHKDGQSRGPMAHGSRYHRR) is disordered.

It belongs to the universal ribosomal protein uL3 family. Part of the 50S ribosomal subunit. Forms a cluster with proteins L14 and L19.

One of the primary rRNA binding proteins, it binds directly near the 3'-end of the 23S rRNA, where it nucleates assembly of the 50S subunit. This is Large ribosomal subunit protein uL3 from Levilactobacillus brevis (strain ATCC 367 / BCRC 12310 / CIP 105137 / JCM 1170 / LMG 11437 / NCIMB 947 / NCTC 947) (Lactobacillus brevis).